Here is a 659-residue protein sequence, read N- to C-terminus: MFKLFTARQHDKIWDFDGGIHPPEMKLQSSTVPMRIAPLPDQLIIPLQQHLGPEGELRVRAGEQVLKGQPLTVGRGRTVPVHAPTSGMITAIAPHTTAHPSGLAELCVHITPDGEDRWREQQPWADYRQRDKMALLDRIHQAGIAGLGGAGFPTASKLQGGLNGIITLIINAAECEPYITADDRLMQEHADEVITGIHILRHLLQPQQVLIGIEDNKPEAIAALQRALRGQDDIHLRVVPTKYPSGGAKQLTKILTGKEVPFGKHSSSIGVLMQNVGTVVAIKRAVIDDEPLIERVVTLTGDALSSPGNFWARIGTPVLYLLKLAGFKPQNPPMVIMGGPLMGFTLPSLDVPIVKISNCILAPAETEMGLSEPEQSCIRCGLCVDACPAGLLPQQLYWFSRGEEHEKARNHNLFDCIECGACAYVCPSNIPLVQYYRQEKAEIRALDQESARAAEAKARFEAKQARLAREKLARELRHKQAAVKLTDADQQTVDAAVSRLTRQSDGSESVINIPAGQMPDNSAVIAAREARKAQARARQAEKQQARSTEETTDVVDPRQAAVAAAIARVKAKKAVQAQHVTTDVAEAGSEAMAEDPRKAAVAAAIARVKAKKAAQAQHVTTDVAEAGSEAMAEDPRKAAVAAAIARVKAKKAAQAINPD.

4Fe-4S ferredoxin-type domains follow at residues 366 to 397 (TEMGLSEPEQSCIRCGLCVDACPAGLLPQQLY) and 407 to 436 (KARNHNLFDCIECGACAYVCPSNIPLVQYY). Cys377, Cys380, Cys383, Cys387, Cys416, Cys419, Cys422, and Cys426 together coordinate [4Fe-4S] cluster.

It belongs to the 4Fe4S bacterial-type ferredoxin family. RnfC subfamily. The complex is composed of six subunits: RnfA, RnfB, RnfC, RnfD, RnfE and RnfG. Requires [4Fe-4S] cluster as cofactor.

The protein resides in the cell inner membrane. Functionally, part of a membrane-bound complex that couples electron transfer with translocation of ions across the membrane. The polypeptide is Ion-translocating oxidoreductase complex subunit C (Yersinia pestis bv. Antiqua (strain Nepal516)).